A 107-amino-acid polypeptide reads, in one-letter code: Phosphoribosyl-ATP pyrophosphatase (107 aa).

It belongs to the PRA-PH family.

It is found in the cytoplasm. It carries out the reaction 1-(5-phospho-beta-D-ribosyl)-ATP + H2O = 1-(5-phospho-beta-D-ribosyl)-5'-AMP + diphosphate + H(+). It participates in amino-acid biosynthesis; L-histidine biosynthesis; L-histidine from 5-phospho-alpha-D-ribose 1-diphosphate: step 2/9. This is Phosphoribosyl-ATP pyrophosphatase from Caulobacter sp. (strain K31).